Here is a 549-residue protein sequence, read N- to C-terminus: Myotubularin-related protein 9 (549 aa).

N-acetylmethionine is present on Met1. The 96-residue stretch at 4 to 99 (AELIKTPRVD…LNIASSIEAL (96 aa)) folds into the GRAM domain. Residues 123-498 (GWHSFLPEQE…QSLPLWEGIF (376 aa)) enclose the Myotubularin phosphatase domain. A coiled-coil region spans residues 508–542 (LDEAYEEMVNIIEYNKELQAKVNILRRQLAELETE). Ser548 is subject to Phosphoserine.

This sequence belongs to the protein-tyrosine phosphatase family. Non-receptor class myotubularin subfamily. In terms of assembly, homodimer. Heterodimer (via C-terminus) with lipid phosphatase MTMR6 (via C-terminus). Heterodimer (via coiled coil domain) with lipid phosphatase MTMR7 (via C-terminus). Heterodimer with lipid phosphatase MTMR8. Expressed in many tissues.

The protein resides in the cytoplasm. It is found in the cell projection. It localises to the ruffle membrane. The protein localises to the perinuclear region. Its subcellular location is the endoplasmic reticulum. Acts as an adapter for myotubularin-related phosphatases. Increases lipid phosphatase MTMR6 catalytic activity, specifically towards phosphatidylinositol 3,5-bisphosphate and MTMR6 binding affinity for phosphorylated phosphatidylinositols. Positively regulates lipid phosphatase MTMR7 catalytic activity. Increases MTMR8 catalytic activity towards phosphatidylinositol 3-phosphate. The formation of the MTMR6-MTMR9 complex, stabilizes both MTMR6 and MTMR9 protein levels. Stabilizes MTMR8 protein levels. Plays a role in the late stages of macropinocytosis possibly by regulating MTMR6-mediated dephosphorylation of phosphatidylinositol 3-phosphate in membrane ruffles. Negatively regulates autophagy, in part via its association with MTMR8. Negatively regulates DNA damage-induced apoptosis, in part via its association with MTMR6. Does not bind mono-, di- and tri-phosphorylated phosphatidylinositols, phosphatidic acid and phosphatidylserine. The protein is Myotubularin-related protein 9 (MTMR9) of Homo sapiens (Human).